Here is a 426-residue protein sequence, read N- to C-terminus: Na(+)/H(+) antiporter 1 (426 aa).

12 helical membrane passes run 1–21 (MELM…SLVA), 29–49 (IPDI…LQII), 57–77 (IFEY…AFTM), 95–115 (ITFL…LNLP), 120–140 (VGYL…IPVF), 158–178 (IFND…FGLF), 184–204 (LIDL…LAKI), 208–228 (IIIH…GAML), 236–256 (LLPS…IMGL), 286–306 (VFIF…NYFI), 309–329 (LLVA…LGLI), and 382–402 (IAGT…ILEA).

The protein belongs to the monovalent cation:proton antiporter 1 (CPA1) transporter (TC 2.A.36) family.

The protein resides in the cell membrane. Its function is as follows. This is a Na(+)/H(+) antiporter. Can also transport lithium. The chain is Na(+)/H(+) antiporter 1 from Methanocaldococcus jannaschii (strain ATCC 43067 / DSM 2661 / JAL-1 / JCM 10045 / NBRC 100440) (Methanococcus jannaschii).